We begin with the raw amino-acid sequence, 485 residues long: Glutamyl-tRNA(Gln) amidotransferase subunit A (485 aa).

Active-site charge relay system residues include Lys-78 and Ser-153. The active-site Acyl-ester intermediate is the Ser-177.

It belongs to the amidase family. GatA subfamily. As to quaternary structure, heterotrimer of A, B and C subunits.

The catalysed reaction is L-glutamyl-tRNA(Gln) + L-glutamine + ATP + H2O = L-glutaminyl-tRNA(Gln) + L-glutamate + ADP + phosphate + H(+). Functionally, allows the formation of correctly charged Gln-tRNA(Gln) through the transamidation of misacylated Glu-tRNA(Gln) in organisms which lack glutaminyl-tRNA synthetase. The reaction takes place in the presence of glutamine and ATP through an activated gamma-phospho-Glu-tRNA(Gln). In Bacillus cereus (strain ATCC 10987 / NRS 248), this protein is Glutamyl-tRNA(Gln) amidotransferase subunit A.